The sequence spans 339 residues: MTAPSTPKPQRKKPKTATTAKPVVPRKEATLHPRNRHTGRYDFQALIKTTPELAQFVIINPYGKESIDFASPDAVRVFNRALLKSFYGIQHWDIPADYLCPPVPGRADYVHFLADLLASVNDGKIPRGSIVKVLDIGMGANCVYPLIGYMEYRWNFLGSEVDPIAVAAAKAIVQSNDLSKVIQLRQQTNPKQILLSLLEPGERFDLTMCNPPFHASMDEATKGSERKWRALGKADPKRKLPVLNFGGQSAELWCEGGEARFVTQLIAESAHFAHKVLWFSTLVSKASNLPAIETALKKAGVLESQVVEMSQGQKQSRFVAWTFQTKNEQQIWRQRWVRD.

Residues Met-1–Arg-26 are disordered.

This sequence belongs to the methyltransferase superfamily. METTL16/RlmF family.

It localises to the cytoplasm. It catalyses the reaction adenosine(1618) in 23S rRNA + S-adenosyl-L-methionine = N(6)-methyladenosine(1618) in 23S rRNA + S-adenosyl-L-homocysteine + H(+). Functionally, specifically methylates the adenine in position 1618 of 23S rRNA. This is Ribosomal RNA large subunit methyltransferase F from Pseudomonas fluorescens (strain SBW25).